A 118-amino-acid polypeptide reads, in one-letter code: Large ribosomal subunit protein uL22 (118 aa).

The protein belongs to the universal ribosomal protein uL22 family. In terms of assembly, part of the 50S ribosomal subunit.

Functionally, this protein binds specifically to 23S rRNA; its binding is stimulated by other ribosomal proteins, e.g. L4, L17, and L20. It is important during the early stages of 50S assembly. It makes multiple contacts with different domains of the 23S rRNA in the assembled 50S subunit and ribosome. Its function is as follows. The globular domain of the protein is located near the polypeptide exit tunnel on the outside of the subunit, while an extended beta-hairpin is found that lines the wall of the exit tunnel in the center of the 70S ribosome. In Levilactobacillus brevis (strain ATCC 367 / BCRC 12310 / CIP 105137 / JCM 1170 / LMG 11437 / NCIMB 947 / NCTC 947) (Lactobacillus brevis), this protein is Large ribosomal subunit protein uL22.